Here is a 272-residue protein sequence, read N- to C-terminus: Putative pyruvate, phosphate dikinase regulatory protein (272 aa).

Position 147–154 (147–154 (GLSRTSKT)) interacts with ADP.

It belongs to the pyruvate, phosphate/water dikinase regulatory protein family. PDRP subfamily.

The catalysed reaction is N(tele)-phospho-L-histidyl/L-threonyl-[pyruvate, phosphate dikinase] + ADP = N(tele)-phospho-L-histidyl/O-phospho-L-threonyl-[pyruvate, phosphate dikinase] + AMP + H(+). The enzyme catalyses N(tele)-phospho-L-histidyl/O-phospho-L-threonyl-[pyruvate, phosphate dikinase] + phosphate + H(+) = N(tele)-phospho-L-histidyl/L-threonyl-[pyruvate, phosphate dikinase] + diphosphate. Its function is as follows. Bifunctional serine/threonine kinase and phosphorylase involved in the regulation of the pyruvate, phosphate dikinase (PPDK) by catalyzing its phosphorylation/dephosphorylation. This Clostridium botulinum (strain Alaska E43 / Type E3) protein is Putative pyruvate, phosphate dikinase regulatory protein.